Here is a 282-residue protein sequence, read N- to C-terminus: MEMO1 family protein Cmaq_1590 (282 aa).

Belongs to the MEMO1 family.

The sequence is that of MEMO1 family protein Cmaq_1590 from Caldivirga maquilingensis (strain ATCC 700844 / DSM 13496 / JCM 10307 / IC-167).